The following is a 4481-amino-acid chain: Dynein axonemal heavy chain 17 (4481 aa).

Residues 1–1792 are stem; that stretch reads MPDLRIDYLE…FANICDAQIK (1792 aa). The Kelch 1 repeat unit spans residues 521-569; it reads LLYMCGGLLERPLILVEVVPRYSVMLEMFNTELDNAKLMYDAQMAASAD. Positions 759–826 form a coiled coil; sequence ENVMEYIQEM…GRVANLNKRY (68 aa). TPR repeat units lie at residues 1533–1566 and 1688–1722; these read VVEATNKPDLYNKLENLKMSLAVCEKALAEYLET and IWWTTEVGLAFARLEEGYENAIKDYNKKQISQLNA. AAA stretches follow at residues 1793-2014, 2074-2295, 2401-2649, and 2747-2996; these read YSYE…VLVV, KIIK…IGFK, ELDP…IFQG, and SYNE…ERRY. Residues 1831-1838 and 2112-2119 contribute to the ATP site; these read GPAGTGKT and GNAGSGKS. A Kelch 2 repeat occupies 2229–2275; sequence ISHLRTATPATVSRAGILYINPADLGWNPVVSSWIERRKVQSEKANL. ATP contacts are provided by residues 2439–2446 and 2785–2792; these read GNAGTGKS and GVGGSGKQ. A Kelch 3 repeat occupies 2782–2834; it reads LLVGVGGSGKQSLSRLAAYISALDVFQITLKKGYAIPDLKMDLATQYIKSAVK. 2 coiled-coil regions span residues 3011–3071 and 3241–3293; these read YQNL…IQVV and DVAP…EKIK. The tract at residues 3011–3297 is stalk; that stretch reads YQNLLAKKRM…TAEKIKCQQE (287 aa). AAA regions lie at residues 3389–3616 and 3826–4059; these read LTDD…EIEE and VKNF…VLYN. Residues 4138–4173 form a TPR 3 repeat; that stretch reads PESPYLYGLHPNAEIGFLTVTSEKLFRTVLEMQPKE. Kelch repeat units follow at residues 4272 to 4321 and 4339 to 4385; these read NLGL…DLLQ and VWLA…DMTA.

Belongs to the dynein heavy chain family. Consists of at least two heavy chains and a number of intermediate and light chains.

Its subcellular location is the cytoplasm. The protein resides in the cytoskeleton. It is found in the flagellum axoneme. Functionally, force generating protein component of the outer dynein arms (ODAs) in the sperm flagellum. Produces force towards the minus ends of microtubules. Dynein has ATPase activity; the force-producing power stroke is thought to occur on release of ADP. Plays a major role in sperm motility, implicated in sperm flagellar assembly and beating. The polypeptide is Dynein axonemal heavy chain 17 (Mus musculus (Mouse)).